A 303-amino-acid chain; its full sequence is Signal recognition particle receptor FtsY (303 aa).

GTP contacts are provided by residues 108-115 (GVNGVGKT), 190-194 (DTAGR), and 254-257 (TKLD).

Belongs to the GTP-binding SRP family. FtsY subfamily. Part of the signal recognition particle protein translocation system, which is composed of SRP and FtsY. SRP is a ribonucleoprotein composed of Ffh and a 4.5S RNA molecule.

It localises to the cell inner membrane. It is found in the cytoplasm. The enzyme catalyses GTP + H2O = GDP + phosphate + H(+). Functionally, involved in targeting and insertion of nascent membrane proteins into the cytoplasmic membrane. Acts as a receptor for the complex formed by the signal recognition particle (SRP) and the ribosome-nascent chain (RNC). Interaction with SRP-RNC leads to the transfer of the RNC complex to the Sec translocase for insertion into the membrane, the hydrolysis of GTP by both Ffh and FtsY, and the dissociation of the SRP-FtsY complex into the individual components. The chain is Signal recognition particle receptor FtsY from Rickettsia prowazekii (strain Madrid E).